The sequence spans 1038 residues: MERIVSRVRRLSPLHTFSDALLISLLSESDFQPDSIQQGVVLFEKDEPTEYWYLLLSGEVQLYSKTYTGDFNHLKTLRCGALFGDLSTLTHSCSCLVTRPAQLIRIAQNHFLSVYNKHGDHLQPFIIIMHDILTDETPSDPIHPHSSGLFNGQRSMDLISTEINPSEIVSVSTNGMLSKMILPSIPNQREKPMNRVVVNQQKNEERNFIEFHNPTGIEKQIRDSGGILHRKMLTDNHQVIRDITTEHTRVQNCMIGAEMIDWLLTLFVSTSTTCSSLSRIQMSAIWQVLLNNGLISHIDGEHQFLDKTNSYYRWVQQFRSRNKVAPSIEEVSKSITLLSSVAPETLFLMIVSKPGFERSPEELEVVYEELTFIKALSHLSTMVKRQLSNFVKVEQYVHAGSVVFRQGEIGVYWYIVLKGAVEVNVNGKIVCLLREGDDFGKLALVNDLPRAATIVTYEDDSMFLVVDKHHFNQILHQVEANTVRLKDYGEDVLVLEKVDIPRGAALENSNSCNFNCGYSVMAGKAEKILEYVLETRIDALGDDISELDVFVEDFILTHDAFMPDNTVCNFLKSYYFRTPYRATRDSITDSCTEEVRCKRRVVQFVYVWCSLLRVNFFLNPVTNSFVEELFCHVIDDRKRLGGMEDILTRIGSIRSTRENMQLVLARHPAIVLDCGVLSAHTPCPVLPSDVCNQIIYLADTTCFVLPIRVDKTAEEICELSRRRMSFSAEPLNLVEVKSNGEKLIFSPNDRAIPTVLSLNSKLYVVNREEIPLLVPMEDQNGPTPSSHSSILHLIDSQELAHQLFLFHLQLLRSTDSNELLYQVIGRESFPLSMPFNLDLLVRRFNEVQHWSTTEILLATEENRMEILKKFISIATIAREYRDLLTVFAITLGLSHTSISRLTLTWSKLPPASLKTFSELENLLDPTRNHRMYRLLVSKMSSPYIPFVPLILKDLMFIHQGNKSFYNGLVNFEKMHMFAKIFRSFRQCKSQMDNGAEHEFIEPQSLIRNLRVIDNQKKLMQLSYEIEPKSAPKRNVIFH.

A nucleoside 3',5'-cyclic phosphate is bound at residue 10–140 (RLSPLHTFSD…DILTDETPSD (131 aa)). A DEP domain is found at 234–316 (TDNHQVIRDI…KTNSYYRWVQ (83 aa)). 375–492 (ALSHLSTMVK…VRLKDYGEDV (118 aa)) serves as a coordination point for a nucleoside 3',5'-cyclic phosphate. An N-terminal Ras-GEF domain is found at 516–654 (CGYSVMAGKA…DILTRIGSIR (139 aa)). The Ras-GEF domain occupies 795 to 1028 (DSQELAHQLF…MQLSYEIEPK (234 aa)).

In terms of assembly, interacts (via C-terminus) with drn-1. Expressed specifically in neurons including the nerve ring, ventral and dorsal nerve cord motor neurons and tail ganglia.

Functionally, guanine nucleotide-releasing protein. Together with GTPase drn-1, may regulate acetylcholine release at the neuromuscular junctions probably downstream of G-protein gsa-1 and adenylate cyclase acy-1. The sequence is that of Rap guanine nucleotide exchange factor 1 (epac-1) from Caenorhabditis elegans.